Reading from the N-terminus, the 216-residue chain is Adenylate kinase (216 aa).

Gly10 to Thr15 serves as a coordination point for ATP. Residues Ser30–Ile59 are NMP. AMP-binding positions include Thr31, Arg36, Lys57–Ile59, Gly85–Arg88, and Gln92. The segment at Gly121–Asp158 is LID. ATP is bound by residues Arg122 and Thr131–Tyr132. The AMP site is built by Arg155 and Arg166. Residue Gln196 participates in ATP binding.

The protein belongs to the adenylate kinase family. Monomer.

It is found in the cytoplasm. It carries out the reaction AMP + ATP = 2 ADP. Its pathway is purine metabolism; AMP biosynthesis via salvage pathway; AMP from ADP: step 1/1. Catalyzes the reversible transfer of the terminal phosphate group between ATP and AMP. Plays an important role in cellular energy homeostasis and in adenine nucleotide metabolism. This chain is Adenylate kinase, found in Buchnera aphidicola subsp. Cinara cedri (strain Cc).